Consider the following 154-residue polypeptide: Transcriptional repressor NrdR (154 aa).

Residues 3 to 34 fold into a zinc finger; it reads CPFCGANDTKVIDSRLVAEGEQVRRRRECVAC. The 91-residue stretch at 49-139 folds into the ATP-cone domain; it reads PRLIKQDGTR…VYRRFQDLDE (91 aa).

It belongs to the NrdR family. It depends on Zn(2+) as a cofactor.

Functionally, negatively regulates transcription of bacterial ribonucleotide reductase nrd genes and operons by binding to NrdR-boxes. This is Transcriptional repressor NrdR from Pseudomonas putida (strain W619).